A 314-amino-acid polypeptide reads, in one-letter code: tRNA pseudouridine synthase B (314 aa).

His-43 contacts substrate. Asp-48 (nucleophile) is an active-site residue. Tyr-76, Tyr-179, and Leu-200 together coordinate substrate.

This sequence belongs to the pseudouridine synthase TruB family. Type 1 subfamily.

The enzyme catalyses uridine(55) in tRNA = pseudouridine(55) in tRNA. Functionally, responsible for synthesis of pseudouridine from uracil-55 in the psi GC loop of transfer RNAs. This is tRNA pseudouridine synthase B from Shigella boydii serotype 4 (strain Sb227).